The following is a 356-amino-acid chain: sn-glycerol-3-phosphate import ATP-binding protein UgpC (356 aa).

An ABC transporter domain is found at 4–235 (LKLQAVTKSW…PASLFVASFI (232 aa)). 37-44 (GPSGCGKS) is an ATP binding site.

The protein belongs to the ABC transporter superfamily. sn-glycerol-3-phosphate importer (TC 3.A.1.1.3) family. The complex is composed of two ATP-binding proteins (UgpC), two transmembrane proteins (UgpA and UgpE) and a solute-binding protein (UgpB).

It localises to the cell inner membrane. It catalyses the reaction sn-glycerol 3-phosphate(out) + ATP + H2O = sn-glycerol 3-phosphate(in) + ADP + phosphate + H(+). Functionally, part of the ABC transporter complex UgpBAEC involved in sn-glycerol-3-phosphate (G3P) import. Responsible for energy coupling to the transport system. This Shigella boydii serotype 4 (strain Sb227) protein is sn-glycerol-3-phosphate import ATP-binding protein UgpC.